Consider the following 869-residue polypeptide: Eukaryotic translation initiation factor 3 subunit C (869 aa).

Disordered regions lie at residues 1 to 92 (MSRF…KSAK) and 182 to 242 (IKKA…VGKG). Residues 14–55 (SSDEEEDLYSDDEEVQEQPEEESSEDDSEEDDDDDDDSDSSS) show a composition bias toward acidic residues. Residues 185–203 (ASKEHQKDIDSFRADKDAY) show a composition bias toward basic and acidic residues. A PCI domain is found at 607 to 781 (FHMHINLELL…SSIIFRKGVE (175 aa)). The interval 803-869 (NERTLETRTQ…ALGAAVGSRA (67 aa)) is disordered. A compositionally biased stretch (gly residues) spans 823-843 (GRGGRGGNRGGRGGGRGGRGG).

Belongs to the eIF-3 subunit C family. In terms of assembly, component of the eukaryotic translation initiation factor 3 (eIF-3) complex.

The protein resides in the cytoplasm. Its function is as follows. Component of the eukaryotic translation initiation factor 3 (eIF-3) complex, which is involved in protein synthesis of a specialized repertoire of mRNAs and, together with other initiation factors, stimulates binding of mRNA and methionyl-tRNAi to the 40S ribosome. The eIF-3 complex specifically targets and initiates translation of a subset of mRNAs involved in cell proliferation. This chain is Eukaryotic translation initiation factor 3 subunit C (nip1), found in Botryotinia fuckeliana (strain B05.10) (Noble rot fungus).